Consider the following 1733-residue polypeptide: Serine-aspartate repeat-containing protein F (1733 aa).

The signal sequence occupies residues 1-45 (MKKRRQGPINKRVDFLSNKVNKYSIRKFTVGTASILVGATLMFGA). The interval 46-678 (ADNEAKAAED…GSSTAQGDNP (633 aa)) is ligand binding A region. Disordered stretches follow at residues 51 to 269 (KAAE…SVND) and 332 to 351 (PLAL…ASPR). The span at 61 to 74 (ASKEEQKGSRDNEN) shows a compositional bias: basic and acidic residues. 2 stretches are compositionally biased toward polar residues: residues 85–99 (GSHS…NNAT) and 146–168 (PKTS…DNLN). Positions 175 to 184 (KESKTDEHST) are enriched in basic and acidic residues. Positions 186 to 226 (QAQMSTNKSNLDTNDSPTQSEKTSSQANNDSTDNQSAPSKQ) are enriched in polar residues. The segment covering 227–253 (LDSKPSEQKVYKTKFNDEPTQDVEHTT) has biased composition (basic and acidic residues). Composition is skewed to polar residues over residues 255–266 (KLKTPSVSTDSS) and 336–346 (NRSQSKNSPHK). 4 CNA-B domains span residues 679–797 (TYSL…YLTP), 798–907 (KYNV…FYKP), 908–1018 (TYNL…YKTP), and 1019–1129 (KYSV…FDDD). The interval 679-1129 (TYSLGDYVWL…SIDNGYFDDD (451 aa)) is type I collagen binding region. Positions 862-890 (FETPEGYTPTKQNSGSDEGKDSNGTKTTV) are disordered. Positions 1085–1708 (KPEGMTQTTA…ANEDHDSKGT (624 aa)) are disordered. Basic and acidic residues predominate over residues 1107–1119 (EDVRVTITDHDDF). The segment covering 1125–1684 (YFDDDSDSDS…DSDSDSDSDS (560 aa)) has biased composition (acidic residues). The segment covering 1685–1706 (DSDKNAKDKLPDTGANEDHDSK) has biased composition (basic and acidic residues). Residues 1694-1698 (LPDTG) carry the LPXTG sorting signal motif. Thr1697 is subject to Pentaglycyl murein peptidoglycan amidated threonine. Residues 1698–1733 (GANEDHDSKGTLLGTLFAGLGALLLGRRRKKDNKEK) constitute a propeptide, removed by sortase.

It belongs to the serine-aspartate repeat-containing protein (SDr) family.

It localises to the secreted. The protein localises to the cell wall. Its function is as follows. Binds to type I collagen via alpha-2(I) or alpha-1(I) chains, although its affinity for the alpha-1(I) chain is significantly higher. Involved in bacterial adherence to transcutaneous drivelines from explanted ventricular assist devices. The chain is Serine-aspartate repeat-containing protein F (sdrF) from Staphylococcus epidermidis.